A 143-amino-acid polypeptide reads, in one-letter code: ATP synthase epsilon chain (143 aa).

This sequence belongs to the ATPase epsilon chain family. F-type ATPases have 2 components, CF(1) - the catalytic core - and CF(0) - the membrane proton channel. CF(1) has five subunits: alpha(3), beta(3), gamma(1), delta(1), epsilon(1). CF(0) has three main subunits: a, b and c.

It localises to the cell inner membrane. Produces ATP from ADP in the presence of a proton gradient across the membrane. The chain is ATP synthase epsilon chain from Dichelobacter nodosus (strain VCS1703A).